Consider the following 236-residue polypeptide: Adenosine 5'-phosphosulfate reductase 2 (236 aa).

[4Fe-4S] cluster is bound by residues Cys-122, Cys-123, Cys-205, and Cys-208. Positions 216 to 236 (NDERAGRWAGREKTECGLHQE) are disordered. The active-site Nucleophile; cysteine thiosulfonate intermediate is Cys-231.

It belongs to the PAPS reductase family. CysH subfamily. [4Fe-4S] cluster is required as a cofactor.

It is found in the cytoplasm. It catalyses the reaction [thioredoxin]-disulfide + sulfite + AMP + 2 H(+) = adenosine 5'-phosphosulfate + [thioredoxin]-dithiol. Its pathway is sulfur metabolism; hydrogen sulfide biosynthesis; sulfite from sulfate. In terms of biological role, catalyzes the formation of sulfite from adenosine 5'-phosphosulfate (APS) using thioredoxin as an electron donor. This is Adenosine 5'-phosphosulfate reductase 2 from Bacillus subtilis (strain 168).